Reading from the N-terminus, the 335-residue chain is UPF0353 protein MAV335 (335 aa).

Helical transmembrane passes span 18–38 and 67–87; these read WFFL…LMQL and LPAI…AGPT. The region spanning 98 to 295 is the VWFA domain; it reads VVMLVIDVSQ…QELKSVYATL (198 aa). Residues 309–329 form a helical membrane-spanning segment; it reads SVGWVRLGALVLRLAADALLI.

This sequence belongs to the UPF0353 family.

The protein localises to the cell membrane. The chain is UPF0353 protein MAV335 from Mycobacterium avium.